Here is a 176-residue protein sequence, read N- to C-terminus: MDLPGPIHDFLLVFLGSGLLVGGLGVVLLPNPIFSAFSLGFVLVCISLLYILSNSHFVAAAQLLIYVGAINVLIIFAVMFMNDSEYSTDLNLWTVGNGITSLVCTTILFSLMSTILDTSWYGVIWTTRLNQILEQDLISNSQQIGIHLSTDFFLPFELISIILLVALIGAISMARQ.

The next 5 membrane-spanning stretches (helical) occupy residues 10–30 (FLLV…VLLP), 32–52 (PIFS…LYIL), 61–81 (AQLL…VMFM), 92–112 (LWTV…FSLM), and 152–172 (FFLP…GAIS).

Belongs to the complex I subunit 6 family. In terms of assembly, NDH is composed of at least 16 different subunits, 5 of which are encoded in the nucleus.

It localises to the plastid. The protein localises to the chloroplast thylakoid membrane. The enzyme catalyses a plastoquinone + NADH + (n+1) H(+)(in) = a plastoquinol + NAD(+) + n H(+)(out). The catalysed reaction is a plastoquinone + NADPH + (n+1) H(+)(in) = a plastoquinol + NADP(+) + n H(+)(out). In terms of biological role, NDH shuttles electrons from NAD(P)H:plastoquinone, via FMN and iron-sulfur (Fe-S) centers, to quinones in the photosynthetic chain and possibly in a chloroplast respiratory chain. The immediate electron acceptor for the enzyme in this species is believed to be plastoquinone. Couples the redox reaction to proton translocation, and thus conserves the redox energy in a proton gradient. This chain is NAD(P)H-quinone oxidoreductase subunit 6, chloroplastic (ndhG), found in Barbarea verna (Land cress).